Reading from the N-terminus, the 42-residue chain is Large ribosomal subunit protein bL34c (42 aa).

Belongs to the bacterial ribosomal protein bL34 family.

Its subcellular location is the plastid. The protein localises to the chloroplast. The protein is Large ribosomal subunit protein bL34c (rpl34) of Olisthodiscus luteus (Marine phytoflagellate).